The primary structure comprises 469 residues: Citrate synthase, mitochondrial (469 aa).

A mitochondrion-targeting transit peptide spans 1–31 (MTLLTASSRAAARLLGAKNSSCIIFAARHAS). Catalysis depends on residues histidine 304 and histidine 350. Position 359 (arginine 359) interacts with oxaloacetate. Aspartate 405 is an active-site residue. Oxaloacetate contacts are provided by arginine 431 and arginine 451.

This sequence belongs to the citrate synthase family. Homodimer.

It is found in the mitochondrion matrix. The enzyme catalyses oxaloacetate + acetyl-CoA + H2O = citrate + CoA + H(+). The protein operates within carbohydrate metabolism; tricarboxylic acid cycle; isocitrate from oxaloacetate: step 1/2. In terms of biological role, key enzyme of the Krebs tricarboxylic acid cycle which catalyzes the synthesis of citrate from acetyl coenzyme A and oxaloacetate. In Amblyrhynchus cristatus (Galapagos marine iguana), this protein is Citrate synthase, mitochondrial (CS).